A 392-amino-acid chain; its full sequence is B2 bradykinin receptor (392 aa).

Topologically, residues 1-61 (MPCSWKLLGF…EWWSWLNAIQ (61 aa)) are extracellular. N-linked (GlcNAc...) asparagine glycans are attached at residues asparagine 29 and asparagine 40. Residues 62 to 85 (APFLWVLFLLAALENLFVLSVFFL) form a helical membrane-spanning segment. Over 86 to 94 (HKNSCTVAE) the chain is Cytoplasmic. Residues 95–119 (IYLGNLAAADLILACGLPFWAITIA) form a helical membrane-spanning segment. Residues 120 to 132 (NNFDWVFGEVLCR) are Extracellular-facing. An intrachain disulfide couples cysteine 131 to cysteine 212. The chain crosses the membrane as a helical span at residues 133 to 154 (VVNTMIYMNLYSSICFLMLVSI). Topologically, residues 155–176 (DRYLALVKTMSMGRMRGVRWAK) are cytoplasmic. Residue tyrosine 157 is modified to Phosphotyrosine. Residues 177 to 199 (LYSLVIWGCTLLLSSPMLVFRTM) form a helical membrane-spanning segment. Over 200–222 (REYSEEGHNVTACVIVYPSRSWE) the chain is Extracellular. Residue asparagine 208 is glycosylated (N-linked (GlcNAc...) asparagine). The helical transmembrane segment at 223–249 (VFTNVLLNLVGFLLPLSVITFCTVRIL) threads the bilayer. Residues 250-268 (QVLRNNEMKKFKEVQTERK) are Cytoplasmic-facing. A helical transmembrane segment spans residues 269 to 293 (ATVLVLAVLGLFVLCWVPFQISTFL). The Extracellular portion of the chain corresponds to 294–312 (DTLLRLGVLSGCWDEHAVD). A helical membrane pass occupies residues 313–336 (VITQISSYVAYSNSGLNPLVYVIV). The Cytoplasmic portion of the chain corresponds to 337-392 (GKRFRKKSREVYRVLCQKGGCMGEPVQMENSMGTLRTSISVERQIHKLQDWAGKKQ). A Phosphotyrosine modification is found at tyrosine 348. A lipid anchor (S-palmitoyl cysteine) is attached at cysteine 352. Phosphoserine is present on serine 367. At threonine 370 the chain carries Phosphothreonine. Phosphoserine; by GRK6 occurs at positions 374 and 376.

It belongs to the G-protein coupled receptor 1 family. Bradykinin receptor subfamily. BDKRB2 sub-subfamily. As to quaternary structure, forms a complex with PECAM1 and GNAQ. Interacts with PECAM1.

The protein resides in the cell membrane. Its function is as follows. Receptor for bradykinin. It is associated with G proteins that activate a phosphatidylinositol-calcium second messenger system. This Mus musculus (Mouse) protein is B2 bradykinin receptor (Bdkrb2).